Here is a 113-residue protein sequence, read N- to C-terminus: MHEMSIALSVVDAITARAREEQAEKVTAIELVAGKLSGVEIESLKFCFSAAVRGTIMEDAELMVTVPLSEGLCEVCGERFAVDGYYTQCPSCGSYKVRIVSGKELSIRSITLE.

His-2 lines the Ni(2+) pocket. The Zn(2+) site is built by Cys-73, Cys-76, Cys-89, and Cys-92.

The protein belongs to the HypA/HybF family.

In terms of biological role, involved in the maturation of [NiFe] hydrogenases. Required for nickel insertion into the metal center of the hydrogenase. The sequence is that of Hydrogenase maturation factor HypA from Prosthecochloris aestuarii (strain DSM 271 / SK 413).